The following is a 320-amino-acid chain: tRNA U34 carboxymethyltransferase (320 aa).

Carboxy-S-adenosyl-L-methionine contacts are provided by residues K89, W103, K108, G127, 177–178, M193, Y197, and R312; that span reads LE.

This sequence belongs to the class I-like SAM-binding methyltransferase superfamily. CmoB family. In terms of assembly, homotetramer.

It catalyses the reaction carboxy-S-adenosyl-L-methionine + 5-hydroxyuridine(34) in tRNA = 5-carboxymethoxyuridine(34) in tRNA + S-adenosyl-L-homocysteine + H(+). Functionally, catalyzes carboxymethyl transfer from carboxy-S-adenosyl-L-methionine (Cx-SAM) to 5-hydroxyuridine (ho5U) to form 5-carboxymethoxyuridine (cmo5U) at position 34 in tRNAs. This chain is tRNA U34 carboxymethyltransferase, found in Stutzerimonas stutzeri (strain A1501) (Pseudomonas stutzeri).